The following is a 254-amino-acid chain: 3-deoxy-manno-octulosonate cytidylyltransferase (254 aa).

Belongs to the KdsB family.

It localises to the cytoplasm. The catalysed reaction is 3-deoxy-alpha-D-manno-oct-2-ulosonate + CTP = CMP-3-deoxy-beta-D-manno-octulosonate + diphosphate. It participates in nucleotide-sugar biosynthesis; CMP-3-deoxy-D-manno-octulosonate biosynthesis; CMP-3-deoxy-D-manno-octulosonate from 3-deoxy-D-manno-octulosonate and CTP: step 1/1. It functions in the pathway bacterial outer membrane biogenesis; lipopolysaccharide biosynthesis. Activates KDO (a required 8-carbon sugar) for incorporation into bacterial lipopolysaccharide in Gram-negative bacteria. This chain is 3-deoxy-manno-octulosonate cytidylyltransferase, found in Pseudomonas aeruginosa (strain ATCC 15692 / DSM 22644 / CIP 104116 / JCM 14847 / LMG 12228 / 1C / PRS 101 / PAO1).